The chain runs to 583 residues: Hyaluronan synthase-related protein (583 aa).

The Cytoplasmic segment spans residues 1 to 29 (MENTTDPENIPVSKPKYPTIRRILSQTFR). Residues 30-50 (ILLLFSITTAYVLGYQALCHQ) traverse the membrane as a helical segment. The Extracellular segment spans residues 51-52 (GL). Residues 53–73 (LITFGLYGAAMLLHLLMQGIF) form a helical membrane-spanning segment. Residues 74–393 (ANLEIRRIEK…CNAQWWHQHH (320 aa)) lie on the Cytoplasmic side of the membrane. A helical transmembrane segment spans residues 394–414 (IWMTYESATGIFFPFFVTAVL). The Extracellular segment spans residues 415–425 (IRLMYSSSLCN). A helical membrane pass occupies residues 426–446 (IVWLFLCIQIMSLLLSLYASW). The Cytoplasmic portion of the chain corresponds to 447-457 (QSKKLSMVLMS). The chain crosses the membrane as a helical span at residues 458 to 478 (LYSTLYIIWLLPCQLVALLTI). The Extracellular portion of the chain corresponds to 479 to 497 (AKSDWGTSGRKKVVNNYVP). A helical transmembrane segment spans residues 498–518 (LFSLSIWAAVLLGGLCYSMYI). At 519-535 (GCRKDWSKPQANRELYH) the chain is on the cytoplasmic side. Residues 536 to 556 (LLYGCAGYMAYWVLMTVIYCV) form a helical membrane-spanning segment. Topologically, residues 557-583 (SGSCCKMRSQAVPQTHDITSLSVSLLV) are extracellular.

The protein belongs to the NodC/HAS family.

The protein resides in the membrane. This is Hyaluronan synthase-related protein (has-rs) from Xenopus laevis (African clawed frog).